The sequence spans 376 residues: Chanoclavine-I aldehyde reductase easA (376 aa).

Residues 29–31 (PTT), Ala-64, Gln-106, and His-173 each bind FMN. Substrate-binding residues include His-173 and Asn-176. Tyr-178 functions as the Proton donor in the catalytic mechanism. FMN-binding positions include Lys-225, Gly-297, 323 to 324 (GR), and Arg-324. Tyr-351 lines the substrate pocket.

This sequence belongs to the NADH:flavin oxidoreductase/NADH oxidase family. FMN serves as cofactor.

The enzyme catalyses dihydrochanoclavine-I aldehyde + NADP(+) = chanoclavine-I aldehyde + NADPH + H(+). Its pathway is alkaloid biosynthesis; ergot alkaloid biosynthesis. Its function is as follows. Aldehyde reductase; part of the gene cluster that mediates the biosynthesis of fumiclavanine C, a fungal ergot alkaloid. DmaW catalyzes the first step of ergot alkaloid biosynthesis by condensing dimethylallyl diphosphate (DMAP) and tryptophan to form 4-dimethylallyl-L-tryptophan. The second step is catalyzed by the methyltransferase easF that methylates 4-dimethylallyl-L-tryptophan in the presence of S-adenosyl-L-methionine, resulting in the formation of 4-dimethylallyl-L-abrine. The catalase easC and the FAD-dependent oxidoreductase easE then transform 4-dimethylallyl-L-abrine to chanoclavine-I which is further oxidized by EasD in the presence of NAD(+), resulting in the formation of chanoclavine-I aldehyde. EasA reduces chanoclavine-I aldehyde to dihydrochanoclavine-I aldehyde that spontaneously dehydrates to form 6,8-dimethyl-6,7-didehydroergoline. EasG then catalyzes the reduction of 6,8-dimethyl-6,7-didehydroergoline to form festuclavine. Hydrolysis of festuclavine by easM then leads to the formation of fumigaclavine B which is in turn acetylated by easN to fumigaclavine A. Finally, easL catalyzes the conversion of fumigaclavine A into fumigaclavine C by attaching a dimethylallyl moiety to C-2 of the indole nucleus. The polypeptide is Chanoclavine-I aldehyde reductase easA (Aspergillus fumigatus (strain ATCC MYA-4609 / CBS 101355 / FGSC A1100 / Af293) (Neosartorya fumigata)).